The primary structure comprises 358 residues: Secreted protein RBT4 (358 aa).

Residues 1–19 (MKFSQVATTAAIFAGLTTA) form the signal peptide. Low complexity-rich tracts occupy residues 48–63 (VTGG…QSAA), 153–174 (TTEV…VATP), and 189–200 (AATTASGSSSGS). 2 disordered regions span residues 48-98 (VTGG…DGGN) and 144-203 (GFPS…SNDF). Positions 216–332 (LDAHNKKRAR…NWGLYVVCSY (117 aa)) constitute an SCP domain.

It belongs to the CRISP family.

The protein resides in the secreted. Secreted protein that acts as a virulence factor during infections such as in posttraumatic corneal infections. Acts as an important antigen in patients with systemic candidiasis and plays a role in the protection against phagocyte attack. The protein is Secreted protein RBT4 (RBT4) of Candida albicans (strain SC5314 / ATCC MYA-2876) (Yeast).